Here is a 193-residue protein sequence, read N- to C-terminus: Probable GTP-binding protein EngB (193 aa).

The EngB-type G domain occupies 22–193 (QLPEFALAGR…EAWGALQKWM (172 aa)). GTP-binding positions include 30-37 (GRSNVGKS), 57-61 (GKTQT), 75-78 (DVPG), 142-145 (TKAD), and 174-176 (FSA). Residues Ser37 and Thr59 each contribute to the Mg(2+) site.

Belongs to the TRAFAC class TrmE-Era-EngA-EngB-Septin-like GTPase superfamily. EngB GTPase family. The cofactor is Mg(2+).

In terms of biological role, necessary for normal cell division and for the maintenance of normal septation. The protein is Probable GTP-binding protein EngB of Anoxybacillus flavithermus (strain DSM 21510 / WK1).